Here is a 123-residue protein sequence, read N- to C-terminus: MVLPLSLLKTAQNHPMLVELKNGETYNGHLKACDSWMNIHLVDVIFTSKDGDKFFKMSEAYVRGSTIKYLRIPETVVDLVKTEVNEVRRQQQREQSRGRGGGRGGRGGHRGGGGNRGGRGGAR.

The 74-residue stretch at L3–V76 folds into the Sm domain. Basic and acidic residues predominate over residues N85–R97. Residues N85–R123 form a disordered region. Residues G98 to R123 are compositionally biased toward gly residues.

This sequence belongs to the snRNP Sm proteins family. As to quaternary structure, component of the precatalytic spliceosome (spliceosome B complex). Component of the U4/U6-U5 tri-snRNP complex, a building block of the precatalytic spliceosome (spliceosome B complex). LSM2, LSM3, LSM4, LSM5, LSM6, LSM7 and LSM8 form a heptameric, ring-shaped subcomplex (the LSM2-8 complex) that is part of the U4/U6-U5 tri-snRNP complex and the precatalytic spliceosome.

It localises to the nucleus. In terms of biological role, plays a role in pre-mRNA splicing as component of the U4/U6-U5 tri-snRNP complex that is involved in spliceosome assembly, and as component of the precatalytic spliceosome (spliceosome B complex). The heptameric LSM2-8 complex binds specifically to the 3'-terminal U-tract of U6 snRNA. This Caenorhabditis elegans protein is Probable U6 snRNA-associated Sm-like protein LSm4 (lsm-4).